The chain runs to 265 residues: Homeobox protein engrailed-2-A (265 aa).

2 stretches are compositionally biased toward basic and acidic residues: residues 1–12 (MEENEQNNREVE) and 102–115 (GEKKSDLAMEETLK). Disordered stretches follow at residues 1–38 (MEENEQNNREVEPQQESGEESNRGILHQAPPGNHQPHH), 75–140 (LSGA…KATQ), and 156–181 (DRPSSGPRSRKPKKKSVSKEDKRPRT). A compositionally biased stretch (low complexity) spans 122-136 (DHSLSSDSDSSQTSS). The homeobox DNA-binding region spans 176–235 (DKRPRTAFTADQLQRLKAEFQTNRYLTEQRRQSLAQELSLNESQIKIWFQNKRAKIKKAT).

This sequence belongs to the engrailed homeobox family.

Its subcellular location is the nucleus. The chain is Homeobox protein engrailed-2-A (en2-a) from Xenopus laevis (African clawed frog).